A 712-amino-acid chain; its full sequence is Protein TAPT1 homolog (712 aa).

Residues Met1 to Ser21 show a composition bias toward low complexity. Disordered stretches follow at residues Met1–Ile22 and Ile44–Thr66. The next 7 helical transmembrane spans lie at Phe196 to Leu216, Thr222 to Ile242, Thr305 to Leu325, His379 to Ile399, Phe402 to Leu422, Gly470 to Leu490, and Ile497 to Met517. A compositionally biased stretch (basic and acidic residues) spans Glu596–Pro619. Positions Glu596–Glu712 are disordered. The span at Thr656–Ala667 shows a compositional bias: polar residues. Residues Thr675–Ser692 show a composition bias toward low complexity.

The protein belongs to the TAPT1 family.

The protein localises to the membrane. This chain is Protein TAPT1 homolog, found in Caenorhabditis elegans.